A 228-amino-acid chain; its full sequence is Core-capsid bridging protein (228 aa).

Residues 146-177 (ARPPAARISPPRRRRRRRRSPRPRATAAYRSS) are disordered. The segment covering 155-167 (PPRRRRRRRRSPR) has biased composition (basic residues). A compositionally biased stretch (low complexity) spans 168-177 (PRATAAYRSS).

This sequence belongs to the adenoviridae core-capsid bridging protein family. In terms of assembly, monomer. Homodimer. Exists in equilibrium between monomers and dimers in solution. Interacts with the histone-like nucleoprotein; this interactions bridge the virus core to the capsid. Interacts with core protein X; this interactions bridge the virus core to the capsid. Interacts with the endosome lysis protein VI; this interactions bridge the virus core to the capsid. Interacts with the peripentonal hexons. Interacts with host NPM1; this interaction might play a role in virus assembly.

The protein resides in the virion. Its subcellular location is the host nucleus. It is found in the host nucleolus. Functionally, associates loosely with the viral DNA to form an outer shell around the nucleoprotein-DNA complex and links it with the capsid by binding the endosome lysis protein. Dissociates from the viral genome during entry. Might be involved in nuclear capsid assembly of the viral particles through its association with NPM1/nucleophosmin. The chain is Core-capsid bridging protein from Murine adenovirus A serotype 1 (MAdV-1).